The sequence spans 520 residues: Probable protein phosphatase 2C 39 (520 aa).

Residues 160-507 (FLTSTEIKMA…DDVTIIVIIL (348 aa)) enclose the PPM-type phosphatase domain. The Mn(2+) site is built by Asp-195, Gly-196, Asp-435, and Asp-498.

This sequence belongs to the PP2C family. Mg(2+) serves as cofactor. Mn(2+) is required as a cofactor.

The catalysed reaction is O-phospho-L-seryl-[protein] + H2O = L-seryl-[protein] + phosphate. The enzyme catalyses O-phospho-L-threonyl-[protein] + H2O = L-threonyl-[protein] + phosphate. The protein is Probable protein phosphatase 2C 39 of Oryza sativa subsp. japonica (Rice).